The sequence spans 190 residues: Homeobox protein SEBOX (190 aa).

Low complexity predominate over residues 1-11 (MPSPVDASSAD). 2 disordered regions span residues 1–24 (MPSPVDASSADGGSGLGSHRRKRT) and 82–161 (ILSP…VHPS). Residues 19–78 (HRRKRTTFSKGQLLELERAFAAWPYPNISTHEHLAWVTCLPEAKVQVWFQKRWAKIIKNR) constitute a DNA-binding region (homeobox). The segment covering 89–100 (CPQSSCSLPDTL) has biased composition (polar residues).

It belongs to the paired homeobox family.

It localises to the nucleus. Functionally, probable transcription factor involved in the control of specification of mesoderm and endoderm. The polypeptide is Homeobox protein SEBOX (SEBOX) (Homo sapiens (Human)).